The following is a 210-amino-acid chain: ATP phosphoribosyltransferase (210 aa).

The protein belongs to the ATP phosphoribosyltransferase family. Short subfamily. In terms of assembly, heteromultimer composed of HisG and HisZ subunits.

It localises to the cytoplasm. It carries out the reaction 1-(5-phospho-beta-D-ribosyl)-ATP + diphosphate = 5-phospho-alpha-D-ribose 1-diphosphate + ATP. The protein operates within amino-acid biosynthesis; L-histidine biosynthesis; L-histidine from 5-phospho-alpha-D-ribose 1-diphosphate: step 1/9. Catalyzes the condensation of ATP and 5-phosphoribose 1-diphosphate to form N'-(5'-phosphoribosyl)-ATP (PR-ATP). Has a crucial role in the pathway because the rate of histidine biosynthesis seems to be controlled primarily by regulation of HisG enzymatic activity. The sequence is that of ATP phosphoribosyltransferase from Caldanaerobacter subterraneus subsp. tengcongensis (strain DSM 15242 / JCM 11007 / NBRC 100824 / MB4) (Thermoanaerobacter tengcongensis).